Consider the following 971-residue polypeptide: Piwi-like protein 2 (971 aa).

Arg-45 carries the post-translational modification Symmetric dimethylarginine. Arg-74 bears the Omega-N-methylarginine; by PRMT5; alternate mark. Arg-74 is subject to Symmetric dimethylarginine; by PRMT5; alternate. Arg-83 bears the Omega-N-methylarginine; alternate mark. Symmetric dimethylarginine; alternate is present on residues Arg-83 and Arg-95. Position 95 is an omega-N-methylarginine; by PRMT5; alternate (Arg-95). Arg-100 bears the Symmetric dimethylarginine; by PRMT5; alternate mark. Residue Arg-100 is modified to Omega-N-methylarginine; alternate. The interval 102 to 124 is disordered; the sequence is LSANMVRKDREEPRSSLPDPSVL. Arg-144 and Arg-156 each carry symmetric dimethylarginine. Residues 159–200 are disordered; that stretch reads SSIGRGMDKPPSAFGLTARDPPRLPQPPALSPTSLHSADPPP. At Arg-163 the chain carries Symmetric dimethylarginine; by PRMT5. Positions 387-500 constitute a PAZ domain; it reads SVLDVMHAIY…LLPELSFMTG (114 aa). Arg-549 carries the post-translational modification Symmetric dimethylarginine; by PRMT5. The 292-residue stretch at 666-957 folds into the Piwi domain; it reads MVVCIIMGTR…LAFLSGQILH (292 aa). Residues Asp-743, Glu-781, Asp-813, and His-946 contribute to the active site.

The protein belongs to the argonaute family. Piwi subfamily. As to quaternary structure, interacts with DDX4, MAEL, EIF3A, EIF4E, EIF4G, PRMT5 and WDR77. Associates with EIF4E- and EIF4G-containing m7G cap-binding complexes. Interacts (when methylated on arginine residues) with TDRD1 and TDRKH/TDRD2. Interacts with TDRD12. Component of the PET complex, at least composed of EXD1, PIWIL2, TDRD12 and piRNAs. Interacts with MOV10L1. Interacts with GPAT2. Interacts with Tex19.1 and, probably, Tex19.2. Interacts (via PIWI domain) with BMAL1 and CLOCK. Interacts with GSK3B. Interacts with TEX15. It depends on Mg(2+) as a cofactor. Post-translationally, arginine methylation by PRMT5 is required for the interaction with Tudor domain-containing protein TDRD1 and subsequent localization to the meiotic nuage, also named P granule. In terms of tissue distribution, expressed in adult testis, specifically in spermatocytes and in spermatogonia. Only detected in primordial germ cells of both sexes. Widely expressed in tumors. Also present at early stages of oocyte growth. Present in the mitotic spermatogonia. Not detected in the first stages of meiosis (preleptotene and leptotene). Detected at the late zygotene stage and increases throughout pachytene, declining from this stage onward until expression stops at the early round spermatid stage (at protein level).

The protein resides in the cytoplasm. Functionally, endoribonuclease that plays a central role during spermatogenesis by repressing transposable elements and preventing their mobilization, which is essential for the germline integrity. Plays an essential role in meiotic differentiation of spermatocytes, germ cell differentiation and in self-renewal of spermatogonial stem cells. Its presence in oocytes suggests that it may participate in similar functions during oogenesis in females. Acts via the piRNA metabolic process, which mediates the repression of transposable elements during meiosis by forming complexes composed of piRNAs and Piwi proteins and govern the methylation and subsequent repression of transposons. During piRNA biosynthesis, plays a key role in the piRNA amplification loop, also named ping-pong amplification cycle, by acting as a 'slicer-competent' piRNA endoribonuclease that cleaves primary piRNAs, which are then loaded onto 'slicer-incompetent' PIWIL4. PIWIL2 slicing produces a pre-miRNA intermediate, which is then processed in mature piRNAs, and as well as a 16 nucleotide by-product that is degraded. Required for PIWIL4/MIWI2 nuclear localization and association with secondary piRNAs antisense. Besides their function in transposable elements repression, piRNAs are probably involved in other processes during meiosis such as translation regulation. Indirectly modulates expression of genes such as PDGFRB, SLC2A1, ITGA6, GJA7, THY1, CD9 and STRA8. Represses circadian rhythms by promoting the stability and activity of core clock components BMAL1 and CLOCK by inhibiting GSK3B-mediated phosphorylation and ubiquitination-dependent degradation of these proteins. The sequence is that of Piwi-like protein 2 from Mus musculus (Mouse).